Consider the following 215-residue polypeptide: Adenylate kinase (215 aa).

10–15 (GAGKGT) serves as a coordination point for ATP. Positions 30–59 (STGDILRDAVSKGTELGKMAKAIMDRGELV) are NMP. Residues T31, R36, 57–59 (ELV), 82–85 (GYPR), and Q89 contribute to the AMP site. The segment at 123–160 (NRRVCPNCGKVYNLITLQPKEDEKCDVCGTKLIQRDDD) is LID. R124 is an ATP binding site. 2 residues coordinate Zn(2+): C127 and C130. Position 133–134 (133–134 (VY)) interacts with ATP. Residues C147 and C150 each coordinate Zn(2+). AMP contacts are provided by R157 and R168. An ATP-binding site is contributed by Q196.

Belongs to the adenylate kinase family. In terms of assembly, monomer.

It localises to the cytoplasm. It carries out the reaction AMP + ATP = 2 ADP. Its pathway is purine metabolism; AMP biosynthesis via salvage pathway; AMP from ADP: step 1/1. In terms of biological role, catalyzes the reversible transfer of the terminal phosphate group between ATP and AMP. Plays an important role in cellular energy homeostasis and in adenine nucleotide metabolism. The sequence is that of Adenylate kinase from Petrotoga mobilis (strain DSM 10674 / SJ95).